The following is a 170-amino-acid chain: ATP synthase subunit b (170 aa).

Residues 22 to 41 form a helical membrane-spanning segment; it reads VLNWAVVVFGLYKFLPGFLG.

Belongs to the ATPase B chain family. As to quaternary structure, F-type ATPases have 2 components, F(1) - the catalytic core - and F(0) - the membrane proton channel. F(1) has five subunits: alpha(3), beta(3), gamma(1), delta(1), epsilon(1). F(0) has four main subunits: a(1), b(1), b'(1) and c(10-14). The alpha and beta chains form an alternating ring which encloses part of the gamma chain. F(1) is attached to F(0) by a central stalk formed by the gamma and epsilon chains, while a peripheral stalk is formed by the delta, b and b' chains.

It is found in the cellular thylakoid membrane. Functionally, f(1)F(0) ATP synthase produces ATP from ADP in the presence of a proton or sodium gradient. F-type ATPases consist of two structural domains, F(1) containing the extramembraneous catalytic core and F(0) containing the membrane proton channel, linked together by a central stalk and a peripheral stalk. During catalysis, ATP synthesis in the catalytic domain of F(1) is coupled via a rotary mechanism of the central stalk subunits to proton translocation. Component of the F(0) channel, it forms part of the peripheral stalk, linking F(1) to F(0). The sequence is that of ATP synthase subunit b from Prochlorococcus marinus subsp. pastoris (strain CCMP1986 / NIES-2087 / MED4).